The primary structure comprises 314 residues: tRNA pseudouridine synthase B (314 aa).

Histidine 43 serves as a coordination point for substrate. Residue aspartate 48 is the Nucleophile of the active site. 3 residues coordinate substrate: tyrosine 76, tyrosine 179, and leucine 200.

Belongs to the pseudouridine synthase TruB family. Type 1 subfamily.

It carries out the reaction uridine(55) in tRNA = pseudouridine(55) in tRNA. Responsible for synthesis of pseudouridine from uracil-55 in the psi GC loop of transfer RNAs. This chain is tRNA pseudouridine synthase B, found in Escherichia coli O157:H7.